Here is a 58-residue protein sequence, read N- to C-terminus: uncharacterized protein (58 aa).

It localises to the plastid. The protein resides in the chloroplast. This is an uncharacterized protein from Chlamydomonas reinhardtii (Chlamydomonas smithii).